The sequence spans 498 residues: Glutamyl-tRNA(Gln) amidotransferase subunit A (498 aa).

Active-site charge relay system residues include K79 and S154. S178 serves as the catalytic Acyl-ester intermediate.

The protein belongs to the amidase family. GatA subfamily. In terms of assembly, heterotrimer of A, B and C subunits.

The catalysed reaction is L-glutamyl-tRNA(Gln) + L-glutamine + ATP + H2O = L-glutaminyl-tRNA(Gln) + L-glutamate + ADP + phosphate + H(+). Functionally, allows the formation of correctly charged Gln-tRNA(Gln) through the transamidation of misacylated Glu-tRNA(Gln) in organisms which lack glutaminyl-tRNA synthetase. The reaction takes place in the presence of glutamine and ATP through an activated gamma-phospho-Glu-tRNA(Gln). This is Glutamyl-tRNA(Gln) amidotransferase subunit A from Psychrobacter cryohalolentis (strain ATCC BAA-1226 / DSM 17306 / VKM B-2378 / K5).